A 105-amino-acid polypeptide reads, in one-letter code: NADH-quinone oxidoreductase subunit K (105 aa).

A run of 3 helical transmembrane segments spans residues 7–27, 34–54, and 66–86; these read IGVN…MFAV, IVIL…FLTF, and FSLF…AIVI.

The protein belongs to the complex I subunit 4L family. NDH-1 is composed of 14 different subunits. Subunits NuoA, H, J, K, L, M, N constitute the membrane sector of the complex.

It localises to the cell inner membrane. It carries out the reaction a quinone + NADH + 5 H(+)(in) = a quinol + NAD(+) + 4 H(+)(out). In terms of biological role, NDH-1 shuttles electrons from NADH, via FMN and iron-sulfur (Fe-S) centers, to quinones in the respiratory chain. The immediate electron acceptor for the enzyme in this species is believed to be a menaquinone. Couples the redox reaction to proton translocation (for every two electrons transferred, four hydrogen ions are translocated across the cytoplasmic membrane), and thus conserves the redox energy in a proton gradient. This chain is NADH-quinone oxidoreductase subunit K, found in Chlorobaculum parvum (strain DSM 263 / NCIMB 8327) (Chlorobium vibrioforme subsp. thiosulfatophilum).